The following is a 380-amino-acid chain: Alpha-N-acetylneuraminate alpha-2,8-sialyltransferase ST8SIA3 (380 aa).

Residues 1–9 (MRNCKMARV) are Cytoplasmic-facing. Residues 10–33 (ASVLGLVMLSVALLNLSLISYVSL) traverse the membrane as a helical; Signal-anchor for type II membrane protein segment. Residues 34–380 (KKENIFATPK…LTKLTLSHCA (347 aa)) lie on the Lumenal side of the membrane. 2 N-linked (GlcNAc...) asparagine glycosylation sites follow: N93 and N113. Intrachain disulfides connect C162/C313 and C176/C379. The CMP-N-acetyl-beta-neuraminate site is built by N167 and N190. N206 is a glycosylation site (N-linked (GlcNAc...) asparagine). CMP-N-acetyl-beta-neuraminate-binding residues include S300, T301, G302, W322, Y336, and H337. The Proton donor/acceptor role is filled by H354.

It belongs to the glycosyltransferase 29 family. As to quaternary structure, homodimer. Post-translationally, autopolysialylated.

It is found in the golgi apparatus membrane. The catalysed reaction is [N-acetyl-alpha-D-neuraminosyl-(2-&gt;8)](n) + CMP-N-acetyl-beta-neuraminate = [N-acetyl-alpha-D-neuraminosyl-(2-&gt;8)](n+1) + CMP + H(+). It catalyses the reaction alpha-Neu5Ac-(2-&gt;3)-beta-D-Gal-(1-&gt;4)-6S-D-GlcNAc + CMP-N-acetyl-beta-neuraminate = alpha-Neu5Ac-(2-&gt;8)-alpha-Neu5Ac-(2-&gt;3)-beta-D-Gal-(1-&gt;4)-6S-D-GlcNAc + CMP + H(+). It carries out the reaction a ganglioside GM3 (d18:1(4E)) + CMP-N-acetyl-beta-neuraminate = a ganglioside GD3 (d18:1(4E)) + CMP + H(+). The enzyme catalyses a ganglioside GM3 + CMP-N-acetyl-beta-neuraminate = a ganglioside GD3 + CMP + H(+). The catalysed reaction is an N-acetyl-alpha-neuraminyl-(2-&gt;3)-beta-D-galactosyl derivative + CMP-N-acetyl-beta-neuraminate = an N-acetyl-alpha-neuraminyl-(2-&gt;8)-N-acetyl-alpha-neuraminyl-(2-&gt;3)-beta-D-galactosyl derivative + CMP + H(+). It catalyses the reaction an N-acetyl-alpha-neuraminyl-(2-&gt;3)-beta-D-galactosyl-(1-&gt;4)-N-acetyl-beta-D-glucosaminyl derivative + CMP-N-acetyl-beta-neuraminate = an alpha-Neu5Ac-(2-&gt;8)-alpha-Neu5Ac-(2-&gt;3)-beta-D-Gal-(1-&gt;4)-beta-D-GlcNAc derivative + CMP + H(+). It functions in the pathway protein modification; protein glycosylation. Functionally, catalyzes the transfer of sialic acid from a CMP-linked sialic acid donor onto a terminal alpha-2,3-, alpha-2,6-, or alpha-2,8-linked sialic acid of an acceptor, such as N-linked oligosaccharides of glycoproteins and glycolipids through alpha-2,8-linkages. Forms oligosialic and polysialic acid on various sialylated N-acetyllactosamine oligosaccharides of glycoproteins, including FETUB N-glycans, a2-HS-glycoprotein (AHSG) and alpha 2,3-sialylated glycosphingolipids, such as alpha 2,3-sialylparagloboside and ganglioside GM3 and to a lesser extent NCAM1 N-glycans. However, it is much more specific to N-linked oligosaccharides of glycoproteins than glycosphingolipids. 2,3-sialylparagloboside serves as the best acceptor substrate among the glycolipids. alpha-Neu5Ac-(2-&gt;8)-alpha-Neu5Ac-(2-&gt;3)-beta-D-Gal-(1-&gt;4)-6S-D-GlcNAc and monosialyl and disialyl N-acetyllactosamines are the best acceptor substrates among glycoproteins. May plays critical role in the striatum by mediating the formation of disialylated and trisialylated terminal glycotopes on N- and O-glycans of specific striatal proteins, regulating their distribution in lipid rafts, affecting their interaction with other binding partners, and subsequently modulating striatal functions. This chain is Alpha-N-acetylneuraminate alpha-2,8-sialyltransferase ST8SIA3, found in Pan troglodytes (Chimpanzee).